The primary structure comprises 417 residues: D-galactonate dehydratase family member RspA (417 aa).

2 residues coordinate substrate: Gln-43 and His-127. Tyr-158 (proton donor/acceptor) is an active-site residue. Asp-223 provides a ligand contact to Mg(2+). Residue His-225 is the Proton donor/acceptor of the active site. 2 residues coordinate Mg(2+): Glu-249 and Glu-275. 5 residues coordinate substrate: Glu-275, Arg-296, His-325, Asp-329, and Glu-352.

This sequence belongs to the mandelate racemase/muconate lactonizing enzyme family. GalD subfamily. Mg(2+) is required as a cofactor.

It carries out the reaction D-gluconate = 2-dehydro-3-deoxy-D-gluconate + H2O. In terms of biological role, has low D-gluconate dehydratase activity (in vitro), suggesting that it has no significant role in D-gluconate degradation in vivo. Has no detectable activity with a panel of 70 other acid sugars (in vitro). The polypeptide is D-galactonate dehydratase family member RspA (rspA) (Pantoea ananatis (strain LMG 20103)).